The following is a 473-amino-acid chain: Zinc finger and SCAN domain-containing protein 21 (473 aa).

Lysine 27 is covalently cross-linked (Glycyl lysine isopeptide (Lys-Gly) (interchain with G-Cter in SUMO2)). Positions 45–127 (RQRFRQFGYH…TLLEDLEREL (83 aa)) constitute an SCAN box domain. The interval 127–169 (LDEPGHQVSTPPNEQKPVWEKISSSGTAKESPSSMQPQPLETS) is disordered. Positions 148–167 (ISSSGTAKESPSSMQPQPLE) are enriched in polar residues. Residues lysine 221 and lysine 232 each participate in a glycyl lysine isopeptide (Lys-Gly) (interchain with G-Cter in SUMO2) cross-link. The segment at 244–272 (LENEKGTKPPLQEAGSKKGRESVPTKPTP) is disordered. The span at 258 to 272 (GSKKGRESVPTKPTP) shows a compositional bias: basic and acidic residues. 7 consecutive C2H2-type zinc fingers follow at residues 277 to 299 (YICA…RRTH), 305 to 327 (YVCT…YRTH), 333 to 354 (YDCK…QRMH), 360 to 382 (YQCK…YRIH), 388 to 410 (YQCN…QRLH), 416 to 438 (YKCK…HRIH), and 444 to 466 (YWCH…QRVH). Lysine 349 participates in a covalent cross-link: Glycyl lysine isopeptide (Lys-Gly) (interchain with G-Cter in SUMO2).

The protein belongs to the krueppel C2H2-type zinc-finger protein family.

It localises to the nucleus. Functionally, strong transcriptional activator. Plays an important role in spermatogenesis; essential for the progression of meiotic prophase I in spermatocytes. This is Zinc finger and SCAN domain-containing protein 21 (ZSCAN21) from Homo sapiens (Human).